The sequence spans 793 residues: Sucrose synthase (793 aa).

Positions 259–738 are GT-B glycosyltransferase; sequence MILNIAIISP…AIKRVTEKYS (480 aa).

Belongs to the glycosyltransferase 1 family. As to quaternary structure, homotetramer.

The enzyme catalyses an NDP-alpha-D-glucose + D-fructose = a ribonucleoside 5'-diphosphate + sucrose + H(+). Functionally, catalyzes the reversible conversion of sucrose and a nucleotide disphosphate (NDP) into fructose and NDP-glucose; although the reaction is freely reversible in vitro, the physiological reaction seems to be sucrose cleavage. Unlike characterized plant enzymes prefers ADP as a cosubstrate, whereas plants prefer UDP. Its preference for ADP over UDP suggests it may directly link sucrose and glycogen metabolism. The chain is Sucrose synthase from Melioribacter roseus (strain JCM 17771 / P3M-2).